We begin with the raw amino-acid sequence, 116 residues long: Putative UPF0320 protein YJR162C (116 aa).

The protein belongs to the UPF0320 family.

The chain is Putative UPF0320 protein YJR162C from Saccharomyces cerevisiae (strain ATCC 204508 / S288c) (Baker's yeast).